The chain runs to 164 residues: Large ribosomal subunit protein uL15 (164 aa).

The span at 1 to 14 (MKLNEIQDNPGSSK) shows a compositional bias: polar residues. Residues 1–35 (MKLNEIQDNPGSSKSRMRVGRGIGSGKGKTCGRGV) are disordered. The segment covering 21 to 35 (RGIGSGKGKTCGRGV) has biased composition (gly residues).

This sequence belongs to the universal ribosomal protein uL15 family. In terms of assembly, part of the 50S ribosomal subunit.

In terms of biological role, binds to the 23S rRNA. The polypeptide is Large ribosomal subunit protein uL15 (Methylocella silvestris (strain DSM 15510 / CIP 108128 / LMG 27833 / NCIMB 13906 / BL2)).